The following is a 225-amino-acid chain: NAD(P)H-quinone oxidoreductase subunit K, chloroplastic (225 aa).

[4Fe-4S] cluster is bound by residues C43, C44, C108, and C139.

The protein belongs to the complex I 20 kDa subunit family. In terms of assembly, NDH is composed of at least 16 different subunits, 5 of which are encoded in the nucleus. It depends on [4Fe-4S] cluster as a cofactor.

Its subcellular location is the plastid. The protein resides in the chloroplast thylakoid membrane. The catalysed reaction is a plastoquinone + NADH + (n+1) H(+)(in) = a plastoquinol + NAD(+) + n H(+)(out). The enzyme catalyses a plastoquinone + NADPH + (n+1) H(+)(in) = a plastoquinol + NADP(+) + n H(+)(out). Functionally, NDH shuttles electrons from NAD(P)H:plastoquinone, via FMN and iron-sulfur (Fe-S) centers, to quinones in the photosynthetic chain and possibly in a chloroplast respiratory chain. The immediate electron acceptor for the enzyme in this species is believed to be plastoquinone. Couples the redox reaction to proton translocation, and thus conserves the redox energy in a proton gradient. The sequence is that of NAD(P)H-quinone oxidoreductase subunit K, chloroplastic from Capsella bursa-pastoris (Shepherd's purse).